Here is a 344-residue protein sequence, read N- to C-terminus: N-acetyl-gamma-glutamyl-phosphate reductase (344 aa).

Residue C149 is part of the active site.

Belongs to the NAGSA dehydrogenase family. Type 1 subfamily.

The protein localises to the cytoplasm. It catalyses the reaction N-acetyl-L-glutamate 5-semialdehyde + phosphate + NADP(+) = N-acetyl-L-glutamyl 5-phosphate + NADPH + H(+). It participates in amino-acid biosynthesis; L-arginine biosynthesis; N(2)-acetyl-L-ornithine from L-glutamate: step 3/4. Its function is as follows. Catalyzes the NADPH-dependent reduction of N-acetyl-5-glutamyl phosphate to yield N-acetyl-L-glutamate 5-semialdehyde. The sequence is that of N-acetyl-gamma-glutamyl-phosphate reductase from Shouchella clausii (strain KSM-K16) (Alkalihalobacillus clausii).